A 229-amino-acid polypeptide reads, in one-letter code: Rab-like protein 2A (229 aa).

Residues 28 to 35, 76 to 80, and 133 to 136 each bind GTP; these read GDSAVGKS, DTAGQ, and NKID. A disordered region spans residues 200 to 229; it reads NLEQEEEDVPDQEQSGSIETPSEEVASPHS.

Belongs to the small GTPase superfamily. Rab family. Interacts with IFT27, IFT81, IFT172, ATP6V1E1, HK1, LDHC, MAPRE1 and HSPA2.

Plays an essential role in male fertility, sperm intra-flagellar transport, and tail assembly. Binds, in a GTP-regulated manner, to a specific set of effector proteins including key proteins involved in cilia development and function and delivers them into the growing sperm tail. This Pongo abelii (Sumatran orangutan) protein is Rab-like protein 2A (RABL2A).